The chain runs to 2422 residues: Interferon-induced very large GTPase 1 (2422 aa).

The tract at residues Glu-945–His-965 is disordered. Residues Pro-954–Ser-963 show a composition bias toward low complexity. Residues Asp-1479 to Gln-1720 enclose the VLIG-type G domain. GTP contacts are provided by residues Gly-1489 to Ser-1496, Asp-1542 to Gly-1545, and Thr-1619 to Asp-1622.

This sequence belongs to the TRAFAC class dynamin-like GTPase superfamily. Very large inducible GTPase (VLIG) family.

It localises to the cytoplasm. It is found in the cytosol. Its subcellular location is the nucleus. The chain is Interferon-induced very large GTPase 1 (GVINP1) from Homo sapiens (Human).